The chain runs to 489 residues: Rhamnulokinase (489 aa).

Alanine 13–arginine 17 contacts ATP. A disulfide bridge connects residues cysteine 68 and cysteine 222. Substrate is bound by residues glycine 83 and histidine 236–threonine 238. Aspartate 237 serves as the catalytic Proton acceptor. Residue threonine 259 participates in ATP binding. Position 296 (asparagine 296) interacts with substrate. Residue glutamine 304 coordinates ATP. The cysteines at positions 353 and 370 are disulfide-linked. Position 402 (glycine 402) interacts with ATP. A disulfide bridge connects residues cysteine 413 and cysteine 417.

It belongs to the rhamnulokinase family. It depends on Mg(2+) as a cofactor.

The catalysed reaction is L-rhamnulose + ATP = L-rhamnulose 1-phosphate + ADP + H(+). It participates in carbohydrate degradation; L-rhamnose degradation; glycerone phosphate from L-rhamnose: step 2/3. Its function is as follows. Involved in the catabolism of L-rhamnose (6-deoxy-L-mannose). Catalyzes the transfer of the gamma-phosphate group from ATP to the 1-hydroxyl group of L-rhamnulose to yield L-rhamnulose 1-phosphate. The protein is Rhamnulokinase of Salmonella dublin (strain CT_02021853).